Consider the following 1127-residue polypeptide: DNA-directed RNA polymerase I subunit RPA2 homolog (1127 aa).

S1025 is modified (phosphoserine).

The protein belongs to the RNA polymerase beta chain family. In terms of assembly, component of the RNA polymerase I (Pol I) complex consisting of at least 13 subunits.

The protein resides in the nucleus. It localises to the nucleolus. It catalyses the reaction RNA(n) + a ribonucleoside 5'-triphosphate = RNA(n+1) + diphosphate. Its activity is regulated as follows. Antisense ribosomal siRNAs silence rRNA expression during the elongation phase by decreasing rpoa-2 occupancy downstream of the RNAi-targeted region in nrde-2-dependent manner. Functionally, DNA-dependent RNA polymerase catalyzes the transcription of DNA into RNA using the four ribonucleoside triphosphates as substrates. Second largest core component of RNA polymerase I which synthesizes ribosomal RNA precursors. Proposed to contribute to the polymerase catalytic activity and forms the polymerase active center together with the largest subunit. Pol I is composed of mobile elements and RPA2 is part of the core element with the central large cleft and probably a clamp element that moves to open and close the cleft. Specifically binds to 18S, 5.8S and 26S rDNA, but not to 5S rDNA. The sequence is that of DNA-directed RNA polymerase I subunit RPA2 homolog from Caenorhabditis elegans.